We begin with the raw amino-acid sequence, 469 residues long: 3-isopropylmalate dehydratase large subunit (469 aa).

Residues Cys-347, Cys-407, and Cys-410 each contribute to the [4Fe-4S] cluster site.

Belongs to the aconitase/IPM isomerase family. LeuC type 1 subfamily. Heterodimer of LeuC and LeuD. [4Fe-4S] cluster is required as a cofactor.

The enzyme catalyses (2R,3S)-3-isopropylmalate = (2S)-2-isopropylmalate. It participates in amino-acid biosynthesis; L-leucine biosynthesis; L-leucine from 3-methyl-2-oxobutanoate: step 2/4. Its function is as follows. Catalyzes the isomerization between 2-isopropylmalate and 3-isopropylmalate, via the formation of 2-isopropylmaleate. The polypeptide is 3-isopropylmalate dehydratase large subunit (Synechococcus sp. (strain RCC307)).